The primary structure comprises 273 residues: UPF0380 protein YfjQ (273 aa).

It belongs to the UPF0380 family.

This is UPF0380 protein YfjQ (yfjQ) from Escherichia coli (strain K12).